A 151-amino-acid polypeptide reads, in one-letter code: Cytochrome c oxidase-assembly factor COX23, mitochondrial (151 aa).

The N-terminal 10 residues, 1–10 (MEKPSPTRRQ), are a transit peptide targeting the mitochondrion. A disordered region spans residues 1-86 (MEKPSPTRRQ…QYYPDDPENP (86 aa)). Over residues 7–18 (TRRQTSSLSTIS) the composition is skewed to polar residues. Over residues 19–51 (NGMTMTNDNRDTTNTNSGSTSSNNSQPSSSSTP) the composition is skewed to low complexity. One can recognise a CHCH domain in the interval 101–143 (YDPCEESSKLSFQCLERNDYDRSKCQEYFDAYRECKKQWLTAR). Short sequence motifs (cx9C motif) lie at residues 104–114 (CEESSKLSFQC) and 125–135 (CQEYFDAYREC). 2 disulfides stabilise this stretch: C104–C135 and C114–C125.

Belongs to the COX23 family.

The protein resides in the cytoplasm. The protein localises to the mitochondrion intermembrane space. Functionally, required for the assembly of cytochrome c oxidase. The sequence is that of Cytochrome c oxidase-assembly factor COX23, mitochondrial (COX23) from Saccharomyces cerevisiae (strain ATCC 204508 / S288c) (Baker's yeast).